Here is a 726-residue protein sequence, read N- to C-terminus: Endo-1,4-beta-xylanase/feruloyl esterase (726 aa).

The signal sequence occupies residues 1 to 19; sequence MKKLLVALSLIAGSLTASA. A GH10 domain is found at 27–369; the sequence is YAAGPGLKDA…KRSLQIIRDF (343 aa). The active-site Proton donor; for xylanase activity is the glutamate 161. The active-site Nucleophile; for xylanase activity is glutamate 280. Residues 370 to 726 are feruloyl esterase; that stretch reads DAAMDNRKPK…LEKMAQSLFK (357 aa). Catalysis depends on serine 629, which acts as the Nucleophile; for esterase activity.

This sequence in the N-terminal section; belongs to the glycosyl hydrolase 10 (cellulase F) family. Monomer or homodimer.

It catalyses the reaction Endohydrolysis of (1-&gt;4)-beta-D-xylosidic linkages in xylans.. The enzyme catalyses feruloyl-polysaccharide + H2O = ferulate + polysaccharide.. The protein operates within glycan degradation; xylan degradation. Functionally, involved in degradation of plant cell wall polysaccharides. Has endo-xylanase activity towards substrates such as oat spelt xylan (OSX), acetylated xylo-oligosaccharides and acetylated xylan, producing primarily xylobiose; cannot hydrolyze xylobiose to xylose. Also has feruloyl esterase activity, releasing ferulic acid from methylferulate, and from the more natural substrates wheat bran, corn fiber, and XOS(FA,Ac), a corn fiber-derived substrate enriched in O-acetyl and ferulic acid esters. Exhibits negligible acetyl esterase activity on sugar acetates. Acts synergistically with Xyl3A to increase the release of xylose from xylan. Does not possess endoglucanase or mannanase activities since it is not able to hydrolyze carboxymethyl cellulose and locust bean gum. The protein is Endo-1,4-beta-xylanase/feruloyl esterase of Xylanibacter ruminicola (strain ATCC 19189 / DSM 19721 / CIP 105475 / JCM 8958 / 23) (Prevotella ruminicola).